The chain runs to 395 residues: Cyclic AMP-responsive element-binding protein 3-like protein 4 (395 aa).

The Cytoplasmic portion of the chain corresponds to 1–295; it reads MDLGIPDLLD…QTSNKAAQTS (295 aa). The interval 82–108 is disordered; that stretch reads EASPGSDSGISEDPCHPDSPPAPRATS. In terms of domain architecture, bZIP spans 217–280; the sequence is VLKKVRRKIR…ISLVAQLRQL (64 aa). The interval 219-248 is basic motif; the sequence is KKVRRKIRNKQSAQDSRRRKKEYIDGLESR. The tract at residues 259 to 280 is leucine-zipper; sequence LQKKVQELERHNISLVAQLRQL. A helical; Signal-anchor for type II membrane protein membrane pass occupies residues 296-316; sequence TCVLILLFSLALIILPSFSPF. At 317–395 the chain is on the lumenal side; the sequence is QSRPEAGSED…IRSVLHADEM (79 aa). Positions 355–395 are disordered; that stretch reads RLREPPGAKDANGSTRTLLEKMGGKPRPSGRIRSVLHADEM. The N-linked (GlcNAc...) asparagine glycan is linked to asparagine 366.

It belongs to the bZIP family. ATF subfamily. As to quaternary structure, binds DNA as a dimer. N-glycosylated in the C-terminal region. Post-translationally, controlled by regulated intramembrane proteolysis (RIP). Following ER stress a fragment containing the cytoplasmic transcription factor domain is released by proteolysis. The cleavage seems to be performed sequentially by site-1 and site-2 proteases (PS1 and PS2). PS1 cleavage may be suppressed by a determinant in the C-terminal region. According to PubMed:11830526, exclusively expressed in the prostate. Expressed in breast and prostate cancer cell lines. Expressed in prostatic luminal epithelial cells (at protein level). Expression is significantly more abundant in prostate cancer than in benign prostatic tissue (prostatic hyperplasia). According to PubMed:12111373, also expressed in brain, pancreas and skeletal muscle, and at lower levels in small intestine, testis, leukocyte and thymus.

It localises to the endoplasmic reticulum membrane. The protein resides in the golgi apparatus membrane. It is found in the nucleus. Its function is as follows. Transcriptional activator that may play a role in the unfolded protein response. Binds to the UPR element (UPRE) but not to CRE element. Preferentially binds DNA with to the consensus sequence 5'-T[GT]ACGT[GA][GT]-3' and has transcriptional activation activity from UPRE. Binds to NF-kappa-B site and has transcriptional activation activity from NF-kappa-B-containing regulatory elements. This is Cyclic AMP-responsive element-binding protein 3-like protein 4 (CREB3L4) from Homo sapiens (Human).